We begin with the raw amino-acid sequence, 654 residues long: Interferon-induced GTP-binding protein Mx1 (654 aa).

An N-acetylmethionine modification is found at Met-1. 2 stretches are compositionally biased toward basic and acidic residues: residues 1–12 (MVLSDLDIKEPD) and 23–32 (DMVREHETES). Residues 1–33 (MVLSDLDIKEPDSPESGLNGSDDMVREHETESK) are disordered. The Dynamin-type G domain maps to 62–335 (DLALPAIAVI…LIMHICKTLP (274 aa)). The segment at 72-79 (GDQSSGKS) is G1 motif. 72–79 (GDQSSGKS) serves as a coordination point for GTP. The G2 motif stretch occupies residues 97 to 99 (VTR). A G3 motif region spans residues 173-176 (DLPG). Residues 173–177 (DLPGI) and 242–245 (TKPD) contribute to the GTP site. The segment at 242–245 (TKPD) is G4 motif. The segment at 274 to 277 (KCRG) is G5 motif. The tract at residues 336 to 361 (LLENQIKETHQRITEELQKYGKDIPE) is bundle signaling element (BSE). Positions 361 to 528 (EEESEKMFSL…HFQMEQLVYC (168 aa)) are middle domain. Residues 362-624 (EESEKMFSLI…KDQYDWLLKE (263 aa)) are stalk. Residues 544–563 (EAEEEKKKKSNHYYQSEDSE) are disordered. Residues 549-552 (KKKK) are critical for lipid-binding. Residues 566–654 (TAEIFQHLMA…ARQRLAKFPG (89 aa)) form the GED domain.

Belongs to the TRAFAC class dynamin-like GTPase superfamily. Dynamin/Fzo/YdjA family. Homooligomer. Oligomerizes into multimeric filamentous or ring-like structures by virtue of its stalk domain. Oligomerization is critical for GTPase activity, protein stability, and recognition of viral target structures. Interacts with TRPC1, TRPC3, TRPC4, TRPC5, TRPC6 and TRPC7. Interacts with HSPA5. Interacts with DDX39A and DDX39B. Interacts with TUBB/TUBB5. Post-translationally, ISGylated.

The protein resides in the cytoplasm. It is found in the endoplasmic reticulum membrane. The protein localises to the perinuclear region. Interferon-induced dynamin-like GTPase with antiviral activity. In Ovis aries (Sheep), this protein is Interferon-induced GTP-binding protein Mx1 (MX1).